Consider the following 420-residue polypeptide: Glucose-1-phosphate adenylyltransferase (420 aa).

Alpha-D-glucose 1-phosphate-binding positions include tyrosine 107, glycine 172, 187 to 188, and serine 205; that span reads EK.

Belongs to the bacterial/plant glucose-1-phosphate adenylyltransferase family. In terms of assembly, homotetramer.

It carries out the reaction alpha-D-glucose 1-phosphate + ATP + H(+) = ADP-alpha-D-glucose + diphosphate. Its pathway is glycan biosynthesis; glycogen biosynthesis. Involved in the biosynthesis of ADP-glucose, a building block required for the elongation reactions to produce glycogen. Catalyzes the reaction between ATP and alpha-D-glucose 1-phosphate (G1P) to produce pyrophosphate and ADP-Glc. This is Glucose-1-phosphate adenylyltransferase from Rhizobium radiobacter (Agrobacterium tumefaciens).